Here is a 671-residue protein sequence, read N- to C-terminus: DNA ligase (671 aa).

Residues 36–40 (DAEYD), 85–86 (SL), and Glu116 contribute to the NAD(+) site. Lys118 acts as the N6-AMP-lysine intermediate in catalysis. Positions 139, 176, 292, and 316 each coordinate NAD(+). Positions 410, 413, 428, and 434 each coordinate Zn(2+). Residues 591 to 671 (QKGGRFQGMT…QFLAMFSEKE (81 aa)) form the BRCT domain.

This sequence belongs to the NAD-dependent DNA ligase family. LigA subfamily. Mg(2+) is required as a cofactor. It depends on Mn(2+) as a cofactor.

It catalyses the reaction NAD(+) + (deoxyribonucleotide)n-3'-hydroxyl + 5'-phospho-(deoxyribonucleotide)m = (deoxyribonucleotide)n+m + AMP + beta-nicotinamide D-nucleotide.. Its function is as follows. DNA ligase that catalyzes the formation of phosphodiester linkages between 5'-phosphoryl and 3'-hydroxyl groups in double-stranded DNA using NAD as a coenzyme and as the energy source for the reaction. It is essential for DNA replication and repair of damaged DNA. The polypeptide is DNA ligase (Acidithiobacillus ferrooxidans (strain ATCC 23270 / DSM 14882 / CIP 104768 / NCIMB 8455) (Ferrobacillus ferrooxidans (strain ATCC 23270))).